The primary structure comprises 194 residues: Probable RNA 2'-phosphotransferase (194 aa).

It belongs to the KptA/TPT1 family.

In terms of biological role, removes the 2'-phosphate from RNA via an intermediate in which the phosphate is ADP-ribosylated by NAD followed by a presumed transesterification to release the RNA and generate ADP-ribose 1''-2''-cyclic phosphate (APPR&gt;P). May function as an ADP-ribosylase. In Escherichia coli O45:K1 (strain S88 / ExPEC), this protein is Probable RNA 2'-phosphotransferase.